Consider the following 92-residue polypeptide: N(2)-fixation sustaining protein CowN (92 aa).

The protein belongs to the CowN family.

Functionally, is required to sustain N(2)-dependent growth in the presence of low levels of carbon monoxide (CO). Probably acts by protecting the N(2) fixation ability of the nitrogenase complex, which is inactivated in the presence of CO. This chain is N(2)-fixation sustaining protein CowN, found in Rhodopseudomonas palustris (strain ATCC BAA-98 / CGA009).